The sequence spans 32 residues: MTQGAKKAPVIWVQGEGCTGCSVSLLNAVCPR.

[4Fe-4S] cluster contacts are provided by cysteine 18 and cysteine 21.

The protein belongs to the [NiFe]/[NiFeSe] hydrogenase small subunit family. Heterodimer of a large and a small subunit. Requires [3Fe-4S] cluster as cofactor. [4Fe-4S] cluster serves as cofactor.

It is found in the periplasm. The enzyme catalyses H2 + A = AH2. This is Periplasmic [NiFeSe] hydrogenase small subunit from Desulfomicrobium norvegicum (strain DSM 1741 / NCIMB 8310) (Desulfovibrio baculatus (strain Norway 4)).